The sequence spans 303 residues: uncharacterized protein (303 aa).

This is an uncharacterized protein from Rickettsia prowazekii (strain Madrid E).